The following is a 312-amino-acid chain: tRNA pseudouridine synthase B (312 aa).

The Nucleophile role is filled by D46. Substrate contacts are provided by Y74, Y177, and L198.

This sequence belongs to the pseudouridine synthase TruB family. Type 1 subfamily.

The enzyme catalyses uridine(55) in tRNA = pseudouridine(55) in tRNA. Its function is as follows. Responsible for synthesis of pseudouridine from uracil-55 in the psi GC loop of transfer RNAs. This Buchnera aphidicola subsp. Acyrthosiphon pisum (strain APS) (Acyrthosiphon pisum symbiotic bacterium) protein is tRNA pseudouridine synthase B.